Consider the following 154-residue polypeptide: uncharacterized protein (154 aa).

One can recognise an HTH marR-type domain in the interval 14-146 (AMNLYRVFAR…LIVLLKKAGI (133 aa)). The H-T-H motif DNA-binding region spans 60-83 (LQQIGSRLLLVSGNVTYVIDKLER).

This is an uncharacterized protein from Bacillus subtilis (strain 168).